We begin with the raw amino-acid sequence, 62 residues long: MAKGTPSFGKRNKTKTHVRCRRCGRRAYHVRKGYCAACGFGRSRRIRRYSWQNKKVNRKRRR.

Residues Cys-20, Cys-23, Cys-35, and Cys-38 each coordinate Zn(2+). The C4-type zinc finger occupies 20–38; sequence CRRCGRRAYHVRKGYCAAC.

Belongs to the eukaryotic ribosomal protein eL37 family. Requires Zn(2+) as cofactor.

Its function is as follows. Binds to the 23S rRNA. This Methanopyrus kandleri (strain AV19 / DSM 6324 / JCM 9639 / NBRC 100938) protein is Large ribosomal subunit protein eL37.